Reading from the N-terminus, the 170-residue chain is MQNRTGLILCALALLMGFLMVCLGAFFISWGSIFDCQGSLIAAYLLLPLGFVILLSGIFWSNYRQVTESKGVLRHMLRQHLAHGALSVATVDRPDFYPPAYEESLEVEKQSCPAEREASGIPPPLYTETGLEFQDGNDSHPEAPPSYRESIASLVVTAISEDAQRRGQEC.

2 consecutive transmembrane segments (helical) span residues 8 to 28 (ILCALALLMGFLMVCLGAFFI) and 40 to 60 (LIAAYLLLPLGFVILLSGIFW). The segment at 112–147 (CPAEREASGIPPPLYTETGLEFQDGNDSHPEAPPSY) is disordered.

Its subcellular location is the membrane. The polypeptide is Transmembrane protein 252 (TMEM252) (Pongo abelii (Sumatran orangutan)).